Reading from the N-terminus, the 614-residue chain is UvrABC system protein C (614 aa).

Positions Asp12–Val89 constitute a GIY-YIG domain. The UVR domain occupies Ala198–Val233.

This sequence belongs to the UvrC family. Interacts with UvrB in an incision complex.

The protein resides in the cytoplasm. In terms of biological role, the UvrABC repair system catalyzes the recognition and processing of DNA lesions. UvrC both incises the 5' and 3' sides of the lesion. The N-terminal half is responsible for the 3' incision and the C-terminal half is responsible for the 5' incision. The sequence is that of UvrABC system protein C from Desulforudis audaxviator (strain MP104C).